Here is a 42-residue protein sequence, read N- to C-terminus: Photosystem I reaction center subunit IX (42 aa).

A helical transmembrane segment spans residues 7–27; sequence YLSAAPVLSTLWLGALAALLI.

Belongs to the PsaJ family.

It localises to the plastid membrane. Functionally, may help in the organization of the PsaE and PsaF subunits. The polypeptide is Photosystem I reaction center subunit IX (Cuscuta reflexa (Southern Asian dodder)).